The following is a 493-amino-acid chain: Guanosine-5'-triphosphate,3'-diphosphate pyrophosphatase (493 aa).

It belongs to the GppA/Ppx family. GppA subfamily.

The enzyme catalyses guanosine 3'-diphosphate 5'-triphosphate + H2O = guanosine 3',5'-bis(diphosphate) + phosphate + H(+). It participates in purine metabolism; ppGpp biosynthesis; ppGpp from GTP: step 2/2. Functionally, catalyzes the conversion of pppGpp to ppGpp. Guanosine pentaphosphate (pppGpp) is a cytoplasmic signaling molecule which together with ppGpp controls the 'stringent response', an adaptive process that allows bacteria to respond to amino acid starvation, resulting in the coordinated regulation of numerous cellular activities. The chain is Guanosine-5'-triphosphate,3'-diphosphate pyrophosphatase from Salmonella heidelberg (strain SL476).